The following is a 101-amino-acid chain: uncharacterized protein (101 aa).

2 helical membrane passes run 52–72 (VVFI…VKLL) and 75–95 (LWRL…SLLG).

Its subcellular location is the endoplasmic reticulum membrane. This is an uncharacterized protein from Schizosaccharomyces pombe (strain 972 / ATCC 24843) (Fission yeast).